Consider the following 170-residue polypeptide: Translocator protein 2 (170 aa).

Transmembrane regions (helical) follow at residues 3-23, 45-65, 78-98, 104-124, and 130-150; these read LQGA…WLFT, VLLL…YLVW, LPLG…VLFF, GLAL…ALIW, and LAAL…ALTY.

The protein belongs to the TspO/BZRP family. Homotetramer. May also form homodimer. Expressed in erythrocytes (at protein level).

The protein localises to the endoplasmic reticulum membrane. It is found in the cell membrane. In terms of biological role, cholesterol-binding protein involved in the redistribution of cholesterol from lipid droplets to the endoplasmic reticulum. Required to meet cholesterol demands during erythropoietic differentiation. May play a role in transport processes at the plasma membrane of erythrocytes, including regulating VDAC-mediated ATP export, and import of the heme precursors protoporphyrin IX and 5-aminolevulinic acid. The chain is Translocator protein 2 (TSPO2) from Homo sapiens (Human).